Here is a 242-residue protein sequence, read N- to C-terminus: MLRNLLLRLSKLLLWLIALSVLLVLLLRWVPPPFTALMIERKIESWRTGEAIDLTREWRPWRELPDDLKMAVIAAEDQKFADHWGFDVAAIRAALSHNERGGSLRGASTLSQQVAKNLFLWSGRSWPRKGLEAWFTALIELMWPKQRILEVYLNSVEWGDGIFGAQAAAQHHFGTGAPYLSAHQASLLAAVLPNPRQWSAGKPSRYVNNRAAWIRQQMRQLGGSHYLQRIKPNHPEWWPSWL.

The chain crosses the membrane as a helical span at residues 12 to 32 (LLLWLIALSVLLVLLLRWVPP).

Belongs to the glycosyltransferase 51 family.

Its subcellular location is the cell inner membrane. It catalyses the reaction [GlcNAc-(1-&gt;4)-Mur2Ac(oyl-L-Ala-gamma-D-Glu-L-Lys-D-Ala-D-Ala)](n)-di-trans,octa-cis-undecaprenyl diphosphate + beta-D-GlcNAc-(1-&gt;4)-Mur2Ac(oyl-L-Ala-gamma-D-Glu-L-Lys-D-Ala-D-Ala)-di-trans,octa-cis-undecaprenyl diphosphate = [GlcNAc-(1-&gt;4)-Mur2Ac(oyl-L-Ala-gamma-D-Glu-L-Lys-D-Ala-D-Ala)](n+1)-di-trans,octa-cis-undecaprenyl diphosphate + di-trans,octa-cis-undecaprenyl diphosphate + H(+). The protein operates within cell wall biogenesis; peptidoglycan biosynthesis. In terms of biological role, peptidoglycan polymerase that catalyzes glycan chain elongation from lipid-linked precursors. This is Biosynthetic peptidoglycan transglycosylase from Stutzerimonas stutzeri (strain A1501) (Pseudomonas stutzeri).